We begin with the raw amino-acid sequence, 74 residues long: Exodeoxyribonuclease 7 small subunit (74 aa).

It belongs to the XseB family. In terms of assembly, heterooligomer composed of large and small subunits.

It is found in the cytoplasm. The enzyme catalyses Exonucleolytic cleavage in either 5'- to 3'- or 3'- to 5'-direction to yield nucleoside 5'-phosphates.. Its function is as follows. Bidirectionally degrades single-stranded DNA into large acid-insoluble oligonucleotides, which are then degraded further into small acid-soluble oligonucleotides. The chain is Exodeoxyribonuclease 7 small subunit from Glaesserella parasuis serovar 5 (strain SH0165) (Haemophilus parasuis).